Consider the following 33-residue polypeptide: rho operon leader peptide (33 aa).

The segment covering M1–T25 has biased composition (polar residues). A disordered region spans residues M1–R33.

In Escherichia coli O157:H7, this protein is rho operon leader peptide (rhoL).